The following is a 619-amino-acid chain: DNA mismatch repair protein MutL (619 aa).

A disordered region spans residues 358–401 (GGNQFARPSEAREAATRFSITSSREPAASGGSSGGASWPHAQPG).

Belongs to the DNA mismatch repair MutL/HexB family.

In terms of biological role, this protein is involved in the repair of mismatches in DNA. It is required for dam-dependent methyl-directed DNA mismatch repair. May act as a 'molecular matchmaker', a protein that promotes the formation of a stable complex between two or more DNA-binding proteins in an ATP-dependent manner without itself being part of a final effector complex. This Klebsiella pneumoniae (strain 342) protein is DNA mismatch repair protein MutL.